The primary structure comprises 280 residues: Undecaprenyl-diphosphatase (280 aa).

Transmembrane regions (helical) follow at residues 2 to 22 (FIIE…TEWL), 45 to 65 (AFME…VVVI), 86 to 106 (WQLW…GLFL), 114 to 134 (FYNL…FIYL), 147 to 167 (LASL…LALF), 188 to 208 (SVVT…ASGW), 223 to 243 (GQIF…LVVI), and 255 to 275 (FTIF…YAAI).

It belongs to the UppP family.

The protein resides in the cell membrane. It carries out the reaction di-trans,octa-cis-undecaprenyl diphosphate + H2O = di-trans,octa-cis-undecaprenyl phosphate + phosphate + H(+). In terms of biological role, catalyzes the dephosphorylation of undecaprenyl diphosphate (UPP). Confers resistance to bacitracin. The chain is Undecaprenyl-diphosphatase from Streptococcus sanguinis (strain SK36).